A 325-amino-acid polypeptide reads, in one-letter code: Glutarate 2-hydroxylase (325 aa).

H160, D162, and H292 together coordinate Fe cation.

The protein belongs to the glutarate hydroxylase family. Homotetramer. Requires Fe(2+) as cofactor.

It catalyses the reaction glutarate + 2-oxoglutarate + O2 = (S)-2-hydroxyglutarate + succinate + CO2. The protein operates within amino-acid degradation. Functionally, acts as an alpha-ketoglutarate-dependent dioxygenase catalyzing hydroxylation of glutarate (GA) to L-2-hydroxyglutarate (L2HG). Functions in a L-lysine degradation pathway that proceeds via cadaverine, glutarate and L-2-hydroxyglutarate. This chain is Glutarate 2-hydroxylase, found in Shigella boydii serotype 18 (strain CDC 3083-94 / BS512).